The sequence spans 276 residues: MAIRVYKPTTPGRRNASVSDFSDLTRSTPEKSLIRKNSKTGGRNNYGRMTSRHRGGGHKRQYRLIDFRRWDKDGVPATVAQIEYDPNRSARIALLHYADGEKRYIIAPEGIKQGDRIETGANADIKPGNNLPLRNIPTGTVVHAIELRPLGGAKIARSAGAAVQLVAKDGAYAQLRMPSGEIRNVDARCRATVGEVGNSDHANIQLGKAGRARWMGKRPITRGESMNPVDHPHGGRTRGGKPPVSPWGKGEVRTRRPKKASNKMIVRRRPNGKNRK.

Disordered regions lie at residues 1–58 (MAIR…GGGH) and 218–276 (RPIT…KNRK). The span at 16–27 (ASVSDFSDLTRS) shows a compositional bias: polar residues. The span at 255 to 276 (RRPKKASNKMIVRRRPNGKNRK) shows a compositional bias: basic residues.

This sequence belongs to the universal ribosomal protein uL2 family. In terms of assembly, part of the 50S ribosomal subunit. Forms a bridge to the 30S subunit in the 70S ribosome.

One of the primary rRNA binding proteins. Required for association of the 30S and 50S subunits to form the 70S ribosome, for tRNA binding and peptide bond formation. It has been suggested to have peptidyltransferase activity; this is somewhat controversial. Makes several contacts with the 16S rRNA in the 70S ribosome. This Bifidobacterium animalis subsp. lactis (strain AD011) protein is Large ribosomal subunit protein uL2.